Consider the following 208-residue polypeptide: Vacuolar iron transporter homolog 5 (208 aa).

Residues 1–41 (MAAMMNNERSSSNKLQVDAENPAAVGDELDLAARANWLRAA) lie on the Cytoplasmic side of the membrane. A helical transmembrane segment spans residues 42-62 (VLGANDGLVSTASLMLGVGAV). Residues 63–69 (KAEARAM) are Vacuolar-facing. Residues 70–90 (VISGFAGLLAGACSMAIGEFV) form a helical membrane-spanning segment. Over 91–125 (SVCSQRDVELAQLERDGKRGGEEEKALPSPAQAAA) the chain is Cytoplasmic. A helical membrane pass occupies residues 126-146 (ASAMAFSVGAVVPLLAAGFIV). Residues 147–151 (NYRLR) are Vacuolar-facing. Residues 152–172 (IAVVVAVASVALAAFGCVGAV) traverse the membrane as a helical segment. Residues 173–184 (LGRAAVARSSAR) lie on the Cytoplasmic side of the membrane. The helical transmembrane segment at 185–205 (VVLGGWAAMGITFGLMRLFKA) threads the bilayer. Topologically, residues 206–208 (SGI) are vacuolar.

Belongs to the CCC1 family.

It is found in the vacuole membrane. The enzyme catalyses Fe(2+)(in) = Fe(2+)(out). In terms of biological role, probable vacuolar iron transporter that may be involved in the regulation of iron distribution throughout the plant. The protein is Vacuolar iron transporter homolog 5 of Oryza sativa subsp. japonica (Rice).